We begin with the raw amino-acid sequence, 559 residues long: Oxygen-dependent choline dehydrogenase (559 aa).

4 to 33 (DYIIIGAGSAGNVLATRLTEESDVSVLLLE) is a binding site for FAD. Positions 182-201 (EGFGPMDRTVTPKGRRASTA) are disordered. The active-site Proton acceptor is the histidine 471.

The protein belongs to the GMC oxidoreductase family. The cofactor is FAD.

The catalysed reaction is choline + A = betaine aldehyde + AH2. It catalyses the reaction betaine aldehyde + NAD(+) + H2O = glycine betaine + NADH + 2 H(+). The protein operates within amine and polyamine biosynthesis; betaine biosynthesis via choline pathway; betaine aldehyde from choline (cytochrome c reductase route): step 1/1. In terms of biological role, involved in the biosynthesis of the osmoprotectant glycine betaine. Catalyzes the oxidation of choline to betaine aldehyde and betaine aldehyde to glycine betaine at the same rate. This Pectobacterium carotovorum subsp. carotovorum (strain PC1) protein is Oxygen-dependent choline dehydrogenase.